The primary structure comprises 266 residues: Integral membrane protein 2B (266 aa).

Over 1–54 (MVKVTFNSALAQKEAKKXEPKSGEEALIIPPDTXAVDCKDPDEVVPVGQRRAWC) the chain is Cytoplasmic. The helical; Signal-anchor for type II membrane protein transmembrane segment at 55–75 (WCMCFGLAFMLAGVILGGAYL) threads the bilayer. Over 76 to 266 (YKYFALQPDD…KFAVETLICS (191 aa)) the chain is Lumenal. The tract at residues 102–134 (EPPANAPAARYQTIEENIKIFEEDGVEFISVPV) is necessary for interaction with APP and inhibitor effects on APP processing. One can recognise a BRICHOS domain in the interval 137–231 (FADSDPANIV…LCHDKETYKL (95 aa)). 2 disulfide bridges follow: Cys-164–Cys-223 and Cys-248–Cys-265. Residue Asn-170 is glycosylated (N-linked (GlcNAc...) asparagine).

The protein belongs to the ITM2 family. As to quaternary structure, homodimer; disulfide-linked. Interacts with SPPL2A and SPPL2B. Interacts with APP. Mature BRI2 (mBRI2) interacts with the APP amyloid-beta A4 protein; the interaction occurs at the cell surface and in the endocytic compartments and enable alpha- and beta-secretase-induced APP cleavage inhibition. Mature BRI2 (mBRI2) interacts with the APP C99; the interaction occurs in the endocytic compartments and enable gamma-secretase-induced C99 cleavage inhibition. May form heterodimers with Bri23 peptide and APP amyloid-beta protein 40. Interacts with ADAM7 in sperm; the interaction increases following capacitation. In terms of processing, the ectodomain C-terminal part of the imBRI2 is processed by furin producing a secreted Bri23 peptide and a mature BRI2, membrane form (mBRI2). The remaining part of the ectodomain of mBRI2 containing the BRICHOS domain is cleaved by ADAM10 and is secreted (BRI2C, soluble form). The membrane-bound N-terminal fragment (BRI2C, membrane form) is further proteolytically processed by SPPL2A and SPPL2B through regulated intramembrane proteolysis producing a secreted C-peptide and a BRI2 intracellular domain (BRI2 ICD) released in the cytosol. Shedding by ADAM10 facilitates intramembrane cleavage but is not absolutely required for BRI2 ICD generation. Post-translationally, glycosylation at Asn-170 is important for cell surface localization, but doesn't affect furin- and ADAM10-induced proteolytic processing.

The protein resides in the golgi apparatus membrane. It is found in the cell membrane. It localises to the endosome membrane. Its subcellular location is the secreted. Its function is as follows. Plays a regulatory role in the processing of the amyloid-beta A4 precursor protein (APP) and acts as an inhibitor of the amyloid-beta peptide aggregation and fibrils deposition. Plays a role in the induction of neurite outgrowth. Functions as a protease inhibitor by blocking access of secretases to APP cleavage sites. Functionally, mature BRI2 (mBRI2) functions as a modulator of the amyloid-beta A4 precursor protein (APP) processing leading to a strong reduction in the secretion of secretase-processed amyloid-beta protein 40 and amyloid-beta protein 42. In terms of biological role, bri23 peptide prevents aggregation of APP amyloid-beta protein 42 into toxic oligomers. The sequence is that of Integral membrane protein 2B (ITM2B) from Sus scrofa (Pig).